The sequence spans 142 residues: Organic hydroperoxide resistance protein-like 2 (142 aa).

Belongs to the OsmC/Ohr family.

This is Organic hydroperoxide resistance protein-like 2 from Staphylococcus saprophyticus subsp. saprophyticus (strain ATCC 15305 / DSM 20229 / NCIMB 8711 / NCTC 7292 / S-41).